A 232-amino-acid polypeptide reads, in one-letter code: Large ribosomal subunit protein uL3 (232 aa).

Belongs to the universal ribosomal protein uL3 family. Part of the 50S ribosomal subunit. Forms a cluster with proteins L14 and L19.

Its function is as follows. One of the primary rRNA binding proteins, it binds directly near the 3'-end of the 23S rRNA, where it nucleates assembly of the 50S subunit. The protein is Large ribosomal subunit protein uL3 of Hydrogenobaculum sp. (strain Y04AAS1).